The primary structure comprises 502 residues: Probable zinc metalloprotease MGG_02107 (502 aa).

The signal sequence occupies residues 1 to 21; sequence MRSPPGAVAALASVAAQLATA. Positions 182, 202, and 235 each coordinate Zn(2+). An N-linked (GlcNAc...) asparagine glycan is attached at Asn-250. Asp-262 contributes to the Zn(2+) binding site. The tract at residues 284 to 307 is disordered; the sequence is QGGSPAGESKERAETRASIGGEND. Asn-375, Asn-417, and Asn-427 each carry an N-linked (GlcNAc...) asparagine glycan. One can recognise a Fibronectin type-III domain in the interval 414 to 502; that stretch reads QVRNVTVDTS…KSPATMPFPG (89 aa).

The protein belongs to the peptidase M28 family. M28B subfamily. It depends on Zn(2+) as a cofactor.

The protein localises to the secreted. This chain is Probable zinc metalloprotease MGG_02107, found in Pyricularia oryzae (strain 70-15 / ATCC MYA-4617 / FGSC 8958) (Rice blast fungus).